A 345-amino-acid polypeptide reads, in one-letter code: Protein lifeguard 1 (345 aa).

Residues 1 to 115 (MSHEKSFLVS…GNYQEEGPPS (115 aa)) are disordered. Pro residues-rich tracts occupy residues 24–46 (APMP…PFQP) and 79–98 (GPYP…PPFQ). The next 7 helical transmembrane spans lie at 139-159 (VFLV…IFTF), 171-191 (VWTY…LSCC), 202-222 (LVAL…IASF), 227-247 (AVIM…IFSM), 257-277 (MGVL…CIFI), 281-301 (ILEI…LAVD), and 320-340 (FAAL…LTII).

It belongs to the BI1 family. LFG subfamily.

It is found in the membrane. In terms of biological role, potential apoptotic regulator. This Mus musculus (Mouse) protein is Protein lifeguard 1 (Grina).